A 411-amino-acid chain; its full sequence is Putative BMP-2-inducible kinase-like protein (411 aa).

Disordered regions lie at residues 1-87 (MIAP…TQDI), 215-280 (SQQQ…RVSQ), and 392-411 (QQSQ…PSKQ). Basic and acidic residues-rich tracts occupy residues 8–18 (SSEEEGQKDEE) and 53–68 (EKRS…KAKY). The stretch at 47–71 (EDEEEEEKRSSDSDYEQAKAKYSDM) forms a coiled coil. Composition is skewed to basic residues over residues 220–234 (VKQR…RQRR) and 243–258 (NGKR…KKTL).

The chain is Putative BMP-2-inducible kinase-like protein (BMP2KL) from Homo sapiens (Human).